We begin with the raw amino-acid sequence, 474 residues long: Lactococcin A secretion protein LcnD (474 aa).

The Cytoplasmic segment spans residues 1–21 (MFDKKLLESSELYDKRYRNFS). A helical transmembrane segment spans residues 22–44 (TLIILPLFILLVGGVIFTFFAHK). Topologically, residues 45-474 (ELTVISTGSI…LDKIMGRGNQ (430 aa)) are extracellular.

This sequence belongs to the membrane fusion protein (MFP) (TC 8.A.1) family.

It localises to the cell membrane. Functionally, involved in the secretion of lactococcin A. This chain is Lactococcin A secretion protein LcnD (lcnD), found in Lactococcus lactis subsp. cremoris (Streptococcus cremoris).